We begin with the raw amino-acid sequence, 541 residues long: GTPase Obg (541 aa).

The Obg domain maps to Pro2–Val159. The tract at residues His63–Gly84 is disordered. Positions Ala160–Ala332 constitute an OBG-type G domain. GTP is bound by residues Gly166 to Ser173, Phe191 to Val195, Asp213 to Gly216, Asn284 to Asp287, and Ser313 to Ala315. 2 residues coordinate Mg(2+): Ser173 and Thr193. Residues Pro350–Pro427 enclose the OCT domain. Positions Lys497–Gly541 are disordered. The span at Gly517 to Gly527 shows a compositional bias: low complexity. A compositionally biased stretch (gly residues) spans Asp528–Gly541.

The protein belongs to the TRAFAC class OBG-HflX-like GTPase superfamily. OBG GTPase family. Monomer. Mg(2+) is required as a cofactor.

It localises to the cytoplasm. Functionally, an essential GTPase which binds GTP, GDP and possibly (p)ppGpp with moderate affinity, with high nucleotide exchange rates and a fairly low GTP hydrolysis rate. Plays a role in control of the cell cycle, stress response, ribosome biogenesis and in those bacteria that undergo differentiation, in morphogenesis control. This chain is GTPase Obg, found in Parafrankia sp. (strain EAN1pec).